We begin with the raw amino-acid sequence, 512 residues long: Cytochrome P450 monooxygenase cheE (512 aa).

A helical transmembrane segment spans residues Tyr5–Ala27. 3 N-linked (GlcNAc...) asparagine glycosylation sites follow: Asn53, Asn124, and Asn168. Cys455 lines the heme pocket. N-linked (GlcNAc...) asparagine glycosylation is found at Asn499 and Asn508.

The protein belongs to the cytochrome P450 family. Requires heme as cofactor.

It is found in the membrane. It functions in the pathway secondary metabolite biosynthesis. Functionally, cytochrome P450 monooxygenase; part of the gene cluster that mediates the biosynthesis of chaetoglobosin A which has a unique inhibitory activity against actin polymerization in mammalian cells. Chaetoglobosin A and its intermediates are involved in the morphological differentiation of C.globosum. The first step of the pathway is the synthesis of prochaetoglobosin I via condensation of one acetyl-CoA, 8 malonyl-CoA, and a L-tryptophan molecule by the PKS-NRPS hybrid synthetase cheA, followed by reduction of backbone double bond to install desired geometry by the enoyl reductase cheB. Further multiple oxidation steps performed by the cytochrome P450 monooxygenases cheE and cheG, as well as by the FAD-linked oxidoreductase cheF, lead to the formation of chaetoglobosin A. Depending on the order of action of these reductases, distinct intermediates can be identified. Within the pathway, the cytochrome P450 monooxygenase cheE catalyzes a stereospecific epoxidation on prochaetoglobosin I, cytoglobosin D, and chaetoglobosin J intermediates. The FAD-linked oxidoreductase cheF performs dehydrogenation of the C-20 hydroxyl groups in the 20-dihyrochaetoglobosin A and cytoglobosin D intermediates. Finally, the cytochrome P450 monooxygenase cheG can catalyze the stereospecific dihydroxylation of prochaetoglobosin I and prochaetoglobosin IV at C-19 and C-20, respectively. The Diels-Alderase cheD may play a role in the post-PKS-NRPS biosynthetic steps catalyzing Diels-Alder cyclization. The polypeptide is Cytochrome P450 monooxygenase cheE (Chaetomium globosum (strain ATCC 6205 / CBS 148.51 / DSM 1962 / NBRC 6347 / NRRL 1970) (Soil fungus)).